A 206-amino-acid chain; its full sequence is Large ribosomal subunit protein mL40 (206 aa).

The N-terminal 46 residues, 1–46, are a transit peptide targeting the mitochondrion; it reads MTASVLRSISLALRPTSGLLGTWQTQLRETHQRASLLSFWELIPMR. The tract at residues 168–192 is disordered; sequence LFPFEKEGPHYTPPIPNYQPPEGRY.

Belongs to the mitochondrion-specific ribosomal protein mL40 family. In terms of assembly, component of the mitochondrial large ribosomal subunit (mt-LSU). Mature mammalian 55S mitochondrial ribosomes consist of a small (28S) and a large (39S) subunit. The 28S small subunit contains a 12S ribosomal RNA (12S mt-rRNA) and 30 different proteins. The 39S large subunit contains a 16S rRNA (16S mt-rRNA), a copy of mitochondrial valine transfer RNA (mt-tRNA(Val)), which plays an integral structural role, and 52 different proteins. mL40 binds to the major groove of the anticodon stem of mt-tRNA(Val) in the central protuberance. In terms of tissue distribution, ubiquitous.

It localises to the mitochondrion. This is Large ribosomal subunit protein mL40 (MRPL40) from Homo sapiens (Human).